The primary structure comprises 545 residues: MEDKNILYGPEPFHPLADGTAGEQMFYALSRYADISGCIALTNAHTKENVLYEEFLKLSCRLAESFKKYGLKQNDTIAVCSENGLQFFLPLIASLYLGIIAAPVSDKYIERELIHSLGIVKPRIIFCSKNTFQKVLNVKSKLKYVETIIILDLNEDLGGYQCLNNFISQNSDINLDVKKFKPNSFNRDDQVALVMFSSGTTGVSKGVMLTHKNIVARFSHCKDPTFGNAINPTTAILTVIPFHHGFGMTTTLGYFTCGFRVALMHTFEEKLFLQSLQDYKVESTLLVPTLMAFFPKSALVEKYDLSHLKEIASGGAPLSKEIGEMVKKRFKLNFVRQGYGLTETTSAVLITPDTDVRPGSTGKIVPFHAVKVVDPTTGKILGPNETGELYFKGDMIMKSYYNNEEATKAIINKDGWLRSGDIAYYDNDGHFYIVDRLKSLIKYKGYQVAPAEIEGILLQHPYIVDAGVTGIPDEAAGELPAAGVVVQTGKYLNEQIVQNFVSSQVSTAKWLRGGVKFLDEIPKGSTGKIDRKVLRQMFEKHKSKL.

A Microbody targeting signal motif is present at residues 543–545 (SKL).

Belongs to the ATP-dependent AMP-binding enzyme family. The cofactor is Mg(2+).

The protein localises to the peroxisome. It catalyses the reaction firefly D-luciferin + ATP + O2 = firefly oxyluciferin + hnu + AMP + CO2 + diphosphate. In terms of biological role, produces green light with a wavelength of 562 nm. This chain is Luciferin 4-monooxygenase, found in Photuris pensylvanica (Pennsylania firefly).